The primary structure comprises 1068 residues: TSC22 domain family protein 1 (1068 aa).

Positions 1 to 98 (MHQPPESTAA…SQAQLQAQPL (98 aa)) are required for interaction with TGFBR1 and promotion of TGF-beta signaling. 3 disordered regions span residues 23 to 110 (AHPA…KKSG), 125 to 288 (ISSN…SPAS), and 602 to 623 (YSQA…QQLQ). Over residues 36–55 (GSASALNAAGTGVGSSATSS) the composition is skewed to low complexity. Residues 58 to 70 (FPPPSLLQPPPPA) show a composition bias toward pro residues. Over residues 84–100 (SLNLLSQAQLQAQPLAP) the composition is skewed to low complexity. Residues 133–142 (EDTESYDDLD) are compositionally biased toward acidic residues. Basic residues predominate over residues 216-240 (HPHHLHHHHHIHHGHHLQHGHHHPS). Positions 241–250 (HVAVASASIP) are enriched in low complexity. Positions 261-271 (KLSTTGSSDSI) are enriched in polar residues. Ser263 carries the post-translational modification Phosphoserine. The segment covering 272–288 (TPVAPTSAVSSSGSPAS) has biased composition (low complexity). Residues 609–620 (VQTPLPGAPPPQ) show a composition bias toward pro residues. A leucine-zipper region spans residues 1000–1021 (VLKEQIKELIEKNSQLEQENNL). Residues 1032-1068 (AQFQAQLQTGSPPATTQPQGTTQPPAQPASQGSGPTA) form a disordered region. The span at 1039–1068 (QTGSPPATTQPQGTTQPPAQPASQGSGPTA) shows a compositional bias: low complexity.

This sequence belongs to the TSC-22/Dip/Bun family. As to quaternary structure, forms homodimers. Forms heterodimers. Component of a complex composed of TSC22D1 (via N-terminus), TGFBR1 and TGFBR2; the interaction between TSC22D1 and TGFBR1 is inhibited by SMAD7 and promoted by TGFB1. Interacts with SMAD7; the interaction requires TGF-beta and the interaction is inhibited by TGFBR1. Interacts with TPT1/fortilin; interaction results in the destabilization of TSC22D1 protein and prevents TSC22D1-mediated apoptosis. Interacts with SMAD4 (via N-terminus). Interacts with ACVRL1/ALK1, ACVR1/ALK2, BMPR1A/ALK3, ACVR1B/ALK4, BMPR1B/ALK6, ACVR2A/ACTRII, and BMPR2. Interacts with SMAD6. Interacts with TFE3; the interaction is enhanced in the presence of TGF-beta. Forms a heterodimer with TSC22D4/THG1. In terms of assembly, forms a heterodimer with TSC22D4/THG1. Interacts with histone H1-2. Interacts with GNL3.

The protein localises to the cytoplasm. The protein resides in the nucleus. Its subcellular location is the cell membrane. It localises to the mitochondrion. Its function is as follows. Transcriptional repressor. Acts on the C-type natriuretic peptide (CNP) promoter. Acts to promote CASP3-mediated apoptosis. Positively regulates TGF-beta signaling by interacting with SMAD7 which inhibits binding of SMAD7 to TGFBR1, preventing recruitment of SMURF ubiquitin ligases to TGFBR1 and inhibiting SMURF-mediated ubiquitination and degradation of TGFBR1. Contributes to enhancement of TGF-beta signaling by binding to and modulating the transcription activator activity of SMAD4. Promotes TGF-beta-induced transcription of COL1A2; via its interaction with TFE3 at E-boxes in the gene proximal promoter. Plays a role in the repression of hematopoietic precursor cell growth. Promotes IL2 deprivation-induced apoptosis in T-lymphocytes, via repression of TSC22D3/GILZ transcription and activation of the caspase cascade. Functionally, may act to negatively regulate TGFB3 signaling and thereby inhibit cell death in mammary gland cells. Positively regulates cell death in response to TGFB3 during mammary gland involution. In Macaca fascicularis (Crab-eating macaque), this protein is TSC22 domain family protein 1.